We begin with the raw amino-acid sequence, 117 residues long: Large ribosomal subunit protein uL18 (117 aa).

The protein belongs to the universal ribosomal protein uL18 family. In terms of assembly, part of the 50S ribosomal subunit; part of the 5S rRNA/L5/L18/L25 subcomplex. Contacts the 5S and 23S rRNAs.

This is one of the proteins that bind and probably mediate the attachment of the 5S RNA into the large ribosomal subunit, where it forms part of the central protuberance. This is Large ribosomal subunit protein uL18 from Pectobacterium atrosepticum (strain SCRI 1043 / ATCC BAA-672) (Erwinia carotovora subsp. atroseptica).